The sequence spans 251 residues: Pyrroloquinoline-quinone synthase (251 aa).

This sequence belongs to the PqqC family.

The catalysed reaction is 6-(2-amino-2-carboxyethyl)-7,8-dioxo-1,2,3,4,7,8-hexahydroquinoline-2,4-dicarboxylate + 3 O2 = pyrroloquinoline quinone + 2 H2O2 + 2 H2O + H(+). It functions in the pathway cofactor biosynthesis; pyrroloquinoline quinone biosynthesis. Its function is as follows. Ring cyclization and eight-electron oxidation of 3a-(2-amino-2-carboxyethyl)-4,5-dioxo-4,5,6,7,8,9-hexahydroquinoline-7,9-dicarboxylic-acid to PQQ. This is Pyrroloquinoline-quinone synthase from Pseudomonas putida (strain W619).